The following is a 33-amino-acid chain: MDNLFRTLFSTFTHLRTSSTILLVGEQHWRNAL.

The protein is Protein YdgV of Escherichia coli (strain K12).